The following is a 306-amino-acid chain: Agmatinase (306 aa).

Mn(2+)-binding residues include histidine 126, aspartate 149, histidine 151, aspartate 153, aspartate 230, and aspartate 232.

It belongs to the arginase family. Agmatinase subfamily. Mn(2+) serves as cofactor.

The catalysed reaction is agmatine + H2O = urea + putrescine. It participates in amine and polyamine biosynthesis; putrescine biosynthesis via agmatine pathway; putrescine from agmatine: step 1/1. Its function is as follows. Catalyzes the formation of putrescine from agmatine. The protein is Agmatinase of Escherichia coli (strain SE11).